Reading from the N-terminus, the 95-residue chain is Non-specific lipid-transfer protein (95 aa).

Disulfide bonds link C4–C52, C14–C29, and C50–C90.

This sequence belongs to the plant LTP family. Seeds.

Plant non-specific lipid-transfer proteins transfer phospholipids as well as galactolipids across membranes. May play a role in wax or cutin deposition in the cell walls of expanding epidermal cells and certain secretory tissues. The polypeptide is Non-specific lipid-transfer protein (Eleusine coracana (Indian finger millet)).